A 58-amino-acid chain; its full sequence is Probable ferredoxin (58 aa).

2 consecutive 4Fe-4S ferredoxin-type domains span residues 2 to 30 (VAKV…LNDD) and 31 to 58 (GIAT…ITIE). [4Fe-4S] cluster contacts are provided by C10, C13, C16, C20, C40, C43, C46, and C50.

[4Fe-4S] cluster is required as a cofactor.

Functionally, ferredoxins are iron-sulfur proteins that transfer electrons in a wide variety of metabolic reactions. The polypeptide is Probable ferredoxin (Methanosarcina thermophila).